The primary structure comprises 695 residues: Follicle-stimulating hormone receptor (695 aa).

A signal peptide spans 1-17; the sequence is MALLLVALLAFLSLGSG. Intrachain disulfides connect C18–C25 and C23–C32. One can recognise an LRRNT domain in the interval 18–46; that stretch reads CHHRLCHCSNGVFLCQESKVTEIPSDLPR. The Extracellular portion of the chain corresponds to 18 to 366; it reads CHHRLCHCSN…EDIMGDDILR (349 aa). 9 LRR repeats span residues 49–72, 73–97, 98–118, 119–143, 144–169, 170–192, 193–216, 217–240, and 241–259; these read VELR…FGDL, EKIE…LPKL, HEIR…AFQN, LPNL…KIQS, LQKV…MGLS, FESM…AFNG, TQLD…VFQG, ASGP…GLEN, and LKKL…PSLE. N-linked (GlcNAc...) asparagine glycosylation is found at N191 and N199. 4 cysteine pairs are disulfide-bonded: C275–C346, C276–C292, C276–C356, and C292–C338. The N-linked (GlcNAc...) asparagine glycan is linked to N293. Y335 carries the sulfotyrosine modification. A helical membrane pass occupies residues 367–387; that stretch reads VLIWFISILAITGNILVLVIL. At 388-398 the chain is on the cytoplasmic side; that stretch reads ITSQYKLTVPR. A helical transmembrane segment spans residues 399 to 421; sequence FLMCNLAFADLCIGIYLLLIASV. At 422-443 the chain is on the extracellular side; that stretch reads DVHTKTEYHNYAIDWQTGAGCD. An intrachain disulfide couples C442 to C517. A helical membrane pass occupies residues 444–465; that stretch reads AAGFFTVFASELSVYTLTAITL. Residues 466–485 are Cytoplasmic-facing; that stretch reads ERWHTITHAMQLECKVQLRH. Residues 486–508 form a helical membrane-spanning segment; the sequence is AASIMLVGWIFAFAVALFPIFGI. Topologically, residues 509-528 are extracellular; that stretch reads SSYMKVSICLPMDIDSPLSQ. The chain crosses the membrane as a helical span at residues 529–550; that stretch reads LYVMSLLVLNVLAFVVICGCYT. The Cytoplasmic portion of the chain corresponds to 551–573; sequence HIYLTVRNPNITSSSSDTKIAKR. Residues 574 to 597 traverse the membrane as a helical segment; sequence MAMLIFTDFLCMAPISFFAISASL. Residues 598 to 608 are Extracellular-facing; sequence KVPLITVSKSK. Residues 609-630 form a helical membrane-spanning segment; that stretch reads ILLVLFYPINSCANPFLYAIFT. The Cytoplasmic segment spans residues 631–695; it reads KNFRRDFFIL…LIPLRHLAKN (65 aa).

The protein belongs to the G-protein coupled receptor 1 family. FSH/LSH/TSH subfamily. Homotrimer. Functions as a homotrimer binding the FSH hormone heterodimer composed of CGA and FSHB. Interacts with ARRB2. Interacts with APPL2; interaction is independent of follicle stimulating hormone stimulation. In terms of processing, N-glycosylated; indirectly required for FSH-binding, possibly via a conformational change that allows high affinity binding of hormone. Sulfated.

The protein localises to the cell membrane. In terms of biological role, g protein-coupled receptor for follitropin, the follicle-stimulating hormone. Through cAMP production activates the downstream PI3K-AKT and ERK1/ERK2 signaling pathways. In Bos taurus (Bovine), this protein is Follicle-stimulating hormone receptor (FSHR).